The following is a 315-amino-acid chain: Glutaminase (315 aa).

Residues Ser70, Asn120, Glu166, Asn173, Tyr197, Tyr249, and Val267 each contribute to the substrate site.

This sequence belongs to the glutaminase family. Homotetramer.

The enzyme catalyses L-glutamine + H2O = L-glutamate + NH4(+). This Rhizobium meliloti (strain 1021) (Ensifer meliloti) protein is Glutaminase.